A 154-amino-acid polypeptide reads, in one-letter code: MHCPFCRHSDSRVIDSRETDEGQAIRRRRSCPECGRRFTTVETAVVAVVKRSGVTEPFSRGKVIRGVRRACQGRQVDDDALNLLAQQVEDTVRAAGLPEVPSHEVGLAILGPLRELDEVAYLRFASVYRSFSSADDFEREIEALRAHRRVSTSR.

A zinc finger lies at 3 to 34; that stretch reads CPFCRHSDSRVIDSRETDEGQAIRRRRSCPEC. In terms of domain architecture, ATP-cone spans 46 to 136; sequence VAVVKRSGVT…VYRSFSSADD (91 aa).

Belongs to the NrdR family. It depends on Zn(2+) as a cofactor.

Negatively regulates transcription of bacterial ribonucleotide reductase nrd genes and operons by binding to NrdR-boxes. This Mycobacterium leprae (strain Br4923) protein is Transcriptional repressor NrdR.